The chain runs to 362 residues: Aminomethyltransferase (362 aa).

This sequence belongs to the GcvT family. The glycine cleavage system is composed of four proteins: P, T, L and H.

The enzyme catalyses N(6)-[(R)-S(8)-aminomethyldihydrolipoyl]-L-lysyl-[protein] + (6S)-5,6,7,8-tetrahydrofolate = N(6)-[(R)-dihydrolipoyl]-L-lysyl-[protein] + (6R)-5,10-methylene-5,6,7,8-tetrahydrofolate + NH4(+). Functionally, the glycine cleavage system catalyzes the degradation of glycine. This Listeria monocytogenes serotype 4b (strain F2365) protein is Aminomethyltransferase.